The chain runs to 135 residues: Probable disulfide formation protein (135 aa).

The helical transmembrane segment at 7 to 26 (SYCLYLAWLFSCIGTLMSVY) threads the bilayer. Cys-36 and Cys-39 are oxidised to a cystine. The next 2 membrane-spanning stretches (helical) occupy residues 41–60 (YQRICLFPLVVILGIAAYRE) and 67–84 (YTLPLALVGFGIAIYQVC). An intrachain disulfide couples Cys-96 to Cys-101. The chain crosses the membrane as a helical span at residues 109–131 (GFITMPMASAAAFCAIACLLVLA).

The protein belongs to the DsbB family. BdbC subfamily.

Its subcellular location is the cell inner membrane. Its function is as follows. Required for disulfide bond formation in some proteins. The chain is Probable disulfide formation protein from Chlamydia trachomatis serovar D (strain ATCC VR-885 / DSM 19411 / UW-3/Cx).